The following is a 33-amino-acid chain: Protein YtiC (33 aa).

Residues 10–29 (FDMLSIYIIYKLIVSNNTWL) form a helical membrane-spanning segment.

It is found in the cell inner membrane. This chain is Protein YtiC, found in Escherichia coli (strain K12).